We begin with the raw amino-acid sequence, 103 residues long: Large ribosomal subunit protein mL63 (103 aa).

It belongs to the mitochondrion-specific ribosomal protein mL63 family.

It localises to the mitochondrion. This is Large ribosomal subunit protein mL63 (mrpl57) from Danio rerio (Zebrafish).